A 301-amino-acid polypeptide reads, in one-letter code: GTPase Era (301 aa).

The Era-type G domain maps to tyrosine 7–glutamate 175. The tract at residues glycine 15–serine 22 is G1. Glycine 15 to serine 22 contacts GTP. The G2 stretch occupies residues glutamine 41–histidine 45. A G3 region spans residues aspartate 62–glycine 65. GTP is bound by residues aspartate 62–leucine 66 and asparagine 124–aspartate 127. Residues asparagine 124–aspartate 127 are G4. The interval isoleucine 154–alanine 156 is G5. The region spanning leucine 206 to serine 283 is the KH type-2 domain.

The protein belongs to the TRAFAC class TrmE-Era-EngA-EngB-Septin-like GTPase superfamily. Era GTPase family. In terms of assembly, monomer.

Its subcellular location is the cytoplasm. The protein localises to the cell inner membrane. Functionally, an essential GTPase that binds both GDP and GTP, with rapid nucleotide exchange. Plays a role in 16S rRNA processing and 30S ribosomal subunit biogenesis and possibly also in cell cycle regulation and energy metabolism. This is GTPase Era from Escherichia coli O157:H7.